The chain runs to 186 residues: Temperature-induced lipocalin-1 (186 aa).

The HPR (Hydrophobic proline-rich) motif lies at 90 to 97; it reads PPFLPIIP. The disordered stretch occupies residues 154 to 174; that stretch reads KLHKTPQSDTPPESNTAPEDS. Positions 158 to 171 are enriched in polar residues; that stretch reads TPQSDTPPESNTAP.

Belongs to the calycin superfamily. Lipocalin family. As to expression, expressed ubiquitously at similar levels, except in dry seeds (at protein level). Present in seeds.

It localises to the cell membrane. The protein resides in the cytoplasm. The protein localises to the plastid. Its subcellular location is the chloroplast membrane. Functionally, involved in basal (BT) and acquired thermotolerance (AT), probably by preventing plasma membrane lipids peroxidation induced by severe heat-shock (HS). Lipocalin that confers protection against oxidative stress caused by heat, freezing, paraquat and light. Confers resistance to high salt (NaCl) levels, probably by protecting chloroplasts from ion toxicity via ion homeostasis maintenance. Required for seed longevity by ensuring polyunsaturated lipids integrity. This chain is Temperature-induced lipocalin-1, found in Arabidopsis thaliana (Mouse-ear cress).